A 405-amino-acid chain; its full sequence is MLNIAALRQQQIPLAAEPRSPVPFHILMKPIGPACNLACRYCYYPQDETPVNKMDDARLEQFIRRYIAAQPAGAREINFVWQGGEPLLAGLSFYKKALALQARYAPDGVTISNSLQTNGTLINDAWCRLFREHGFIIGLSLEGNEALQDYHRPDKRGRSTWSAALRGIDLLHQHQVDFNLLVVVHNEMAAHAAAIYDRLVSLGARYLQFQPLMSEGAALREGYQLSADNWGRFMVGIWRQWRKRCDRGRVFVINIEQAWAQYFTHTSGSCVHSARCGSNLVMEPDGQLYACDHLINAEHRLGRLDEQTLAAAVDASVQLPFGQQKSLRRECQTCSVKMVCQGGCPAHLNAAGNNRLCGGYYRFFSDILAPLRPFSRDLNGLKAWRAAFVGTAAYCVAPYPDDIPL.

The region spanning 18 to 249 is the Radical SAM core domain; it reads PRSPVPFHIL…QWRKRCDRGR (232 aa). 2 residues coordinate [4Fe-4S] cluster: Cys35 and Cys39. Residue Tyr41 coordinates S-adenosyl-L-methionine. A [4Fe-4S] cluster-binding site is contributed by Cys42. Positions 84, 140, and 152 each coordinate S-adenosyl-L-methionine. [4Fe-4S] cluster-binding residues include Cys270, Cys276, and Cys291. The active-site Proton acceptor is Asp292. Cys331, Cys334, Cys340, Cys344, and Cys357 together coordinate [4Fe-4S] cluster.

This sequence belongs to the radical SAM superfamily. Anaerobic sulfatase-maturating enzyme family. In terms of assembly, monomer. Interacts with AtsA prior to its export to the periplasm. [4Fe-4S] cluster is required as a cofactor.

It is found in the cytoplasm. The enzyme catalyses L-seryl-[sulfatase] + S-adenosyl-L-methionine = 3-oxo-L-alanyl-[sulfatase] + 5'-deoxyadenosine + L-methionine + H(+). Its pathway is protein modification; sulfatase oxidation. In terms of biological role, involved in 'Ser-type' sulfatase maturation under anaerobic conditions. Catalyzes the post-translational modification of serine ('Ser-72' in the arylsulfatase AtsA) into 3-oxoalanine (also known as C(alpha)-formylglycine (FGly)), by a free radical chemical mechanism initiated via the reductive cleavage of S-adenosyl-L-methionine (SAM). The sequence is that of Serine-type anaerobic sulfatase-maturating enzyme from Klebsiella aerogenes (Enterobacter aerogenes).